The sequence spans 75 residues: M-myrmeciitoxin-Mp2a (75 aa).

Residues 1 to 26 (MKLSCLLLTLAIIFVLTIVHAPNVEA) form the signal peptide. Residues 27–48 (KALADPESDAVGFADAVGEADP) constitute a propeptide that is removed on maturation. Leucine amide is present on L74.

It belongs to the formicidae venom precursor-01 superfamily. Ant pilosulin family. In terms of assembly, heterodimer with M-MIITX-Mp2b (pilosin-3b) (AC P0C023); disulfide-linked. Only heterodimers (and not monomers) have been identified in the venom. In terms of tissue distribution, expressed by the venom gland.

It localises to the secreted. Functionally, heterodimer protein that may serve both defensive (pain-inducing) and predatory (insecticidal) roles. Has membrane-disrupting activity and shows induction of non-specific calcium influx into cells,. Shows broad-spectrum activity against a diverse range of bacteria, and cell lines, as well as hemolytic activity (EC(50)=2.18 uM). In vivo, shows moderate insecticidal activity against D.melanogaster and potent anthelmintic activity against the veterinary nematode H.contortus. In addition, intraplantar injection into mice induces nocifensive behavior and mechanical allodynia. This Myrmecia pilosula (Jack jumper ant) protein is M-myrmeciitoxin-Mp2a.